A 701-amino-acid chain; its full sequence is Polyribonucleotide nucleotidyltransferase (701 aa).

Mg(2+) is bound by residues Asp-487 and Asp-493. A KH domain is found at 554-613 (PTMIAMKIDTDKIRDVIGKGGATIRAICEETKASIDIEDDGSIKIFGESKEAAEAARQRV). The 69-residue stretch at 623–691 (GKIYVGKVER…NRGRIKLSIK (69 aa)) folds into the S1 motif domain.

It belongs to the polyribonucleotide nucleotidyltransferase family. As to quaternary structure, component of the RNA degradosome, which is a multiprotein complex involved in RNA processing and mRNA degradation. The cofactor is Mg(2+).

It is found in the cytoplasm. The enzyme catalyses RNA(n+1) + phosphate = RNA(n) + a ribonucleoside 5'-diphosphate. Its function is as follows. Involved in mRNA degradation. Catalyzes the phosphorolysis of single-stranded polyribonucleotides processively in the 3'- to 5'-direction. This chain is Polyribonucleotide nucleotidyltransferase, found in Pseudomonas savastanoi pv. phaseolicola (strain 1448A / Race 6) (Pseudomonas syringae pv. phaseolicola (strain 1448A / Race 6)).